The primary structure comprises 344 residues: Meiotic recombination protein DMC1 homolog B (344 aa).

Residue 133-140 participates in ATP binding; it reads GEFRSGKT. DsDNA is bound at residue Arg235. SsDNA-binding residues include Arg235, Phe238, Arg241, Arg247, and Arg315. Residues Arg241 and Arg247 each coordinate dsDNA.

This sequence belongs to the RecA family. DMC1 subfamily. Highly expressed in spikelets. Expressed in meiotic young panicles.

Its subcellular location is the nucleus. Recombinase that may participate in meiotic recombination, specifically in homologous strand assimilation, which is required for the resolution of meiotic double-strand breaks. Exhibits DNA-dependent ATPase activity when bound to single-stranded DNA (ssDNA). Mediates renaturation of homologous complementary strands as well as assimilation of single strands into homologous supercoiled duplexes leading to D-loop formation. Binds circular single-stranded DNA (ssDNA) and circular double-stranded DNA (dsDNA) in vitro. Catalyzes DNA homologous renaturation and DNA strand exchange. The rates of these activities are dependent on the state of ATP hydrolysis. Forms helical filaments along ssDNA and dsDNA, and promotes strand exchange between ssDNA and dsDNA with long DNA substrates of several thousand base pairs. The presence of the replication protein A is not required for this activity. Seems to be required for homologous pairing and subsequent chromosome segregation during male meiosis. May be not directly required for homologous pairing during male meiosis. Required for synaptonemal complex assembly and crossover formation. Functions redundantly with DMC1A. The polypeptide is Meiotic recombination protein DMC1 homolog B (Oryza sativa subsp. japonica (Rice)).